A 206-amino-acid polypeptide reads, in one-letter code: Histidine biosynthesis bifunctional protein HisIE (206 aa).

Residues 1-117 form a phosphoribosyl-AMP cyclohydrolase region; the sequence is MCNEPATSDV…SCFPAAPGQF (117 aa). The segment at 118 to 206 is phosphoribosyl-ATP pyrophosphohydrolase; that stretch reads LGALDALVAE…AVTVLEARHR (89 aa).

This sequence in the N-terminal section; belongs to the PRA-CH family. It in the C-terminal section; belongs to the PRA-PH family.

It localises to the cytoplasm. The catalysed reaction is 1-(5-phospho-beta-D-ribosyl)-ATP + H2O = 1-(5-phospho-beta-D-ribosyl)-5'-AMP + diphosphate + H(+). The enzyme catalyses 1-(5-phospho-beta-D-ribosyl)-5'-AMP + H2O = 1-(5-phospho-beta-D-ribosyl)-5-[(5-phospho-beta-D-ribosylamino)methylideneamino]imidazole-4-carboxamide. It functions in the pathway amino-acid biosynthesis; L-histidine biosynthesis; L-histidine from 5-phospho-alpha-D-ribose 1-diphosphate: step 2/9. The protein operates within amino-acid biosynthesis; L-histidine biosynthesis; L-histidine from 5-phospho-alpha-D-ribose 1-diphosphate: step 3/9. The polypeptide is Histidine biosynthesis bifunctional protein HisIE (hisI) (Xylella fastidiosa (strain 9a5c)).